A 237-amino-acid polypeptide reads, in one-letter code: CD63 antigen (237 aa).

Residues 1 to 11 are Cytoplasmic-facing; the sequence is MAVEGGMKCVK. Residues 12–32 traverse the membrane as a helical segment; sequence FLLYVLLLVFCACAVGLIAVG. Topologically, residues 33 to 51 are extracellular; the sequence is VGTHLVLNQTITHGATPSF. N-linked (GlcNAc...) asparagine glycosylation occurs at Asn40. Residues 52-72 form a helical membrane-spanning segment; that stretch reads LLPVVIIAVGAFLFLVAFVGC. At 73-81 the chain is on the cytoplasmic side; it reads CGACKENYC. The helical transmembrane segment at 82-102 threads the bilayer; that stretch reads LMITFAIFLSLIMLVEVAAAI. Residues 103-202 lie on the Extracellular side of the membrane; it reads AGYVFRDKVR…KIAAWLRKNV (100 aa). Residues Asn130, Asn150, and Asn171 are each glycosylated (N-linked (GlcNAc...) asparagine). A helical transmembrane segment spans residues 203-223; it reads LVVAAAALGIAFVEILGIVLA. At 224-237 the chain is on the cytoplasmic side; that stretch reads CCLVKSIRSGYEVM. Positions 233–237 match the Lysosomal targeting motif motif; sequence GYEVM.

It belongs to the tetraspanin (TM4SF) family. Interacts with TIMP1 and ITGB1 and recruits TIMP1 to ITGB1. Interacts with CD9. Identified in a complex with CD9 and ITGB3. Interacts with PMEL. Interacts with KDR/VEGFR2; identified in a complex with ITGB1 and KDR/VEGFR2 and is required to recruit KDR to ITGB1 complexes. Interacts with SYT7. In terms of processing, palmitoylated at a low, basal level in unstimulated platelets. The level of palmitoylation increases when platelets are activated by thrombin (in vitro).

It is found in the cell membrane. The protein localises to the lysosome membrane. It localises to the late endosome membrane. The protein resides in the endosome. Its subcellular location is the multivesicular body. It is found in the melanosome. The protein localises to the secreted. It localises to the extracellular exosome. The protein resides in the cell surface. Functionally, functions as a cell surface receptor for TIMP1 and plays a role in the activation of cellular signaling cascades. Plays a role in the activation of ITGB1 and integrin signaling, leading to the activation of AKT, FAK/PTK2 and MAP kinases. Promotes cell survival, reorganization of the actin cytoskeleton, cell adhesion, spreading and migration, via its role in the activation of AKT and FAK/PTK2. Plays a role in VEGFA signaling via its role in regulating the internalization of KDR/VEGFR2. Plays a role in intracellular vesicular transport processes, and is required for normal trafficking of the PMEL luminal domain that is essential for the development and maturation of melanocytes. Plays a role in the adhesion of leukocytes onto endothelial cells via its role in the regulation of SELP trafficking. May play a role in mast cell degranulation in response to Ms4a2/FceRI stimulation, but not in mast cell degranulation in response to other stimuli. This chain is CD63 antigen (CD63), found in Bos taurus (Bovine).